Here is a 514-residue protein sequence, read N- to C-terminus: WD repeat-containing protein 26 (514 aa).

A CTLH domain is found at 9 to 84 (EHPSATKFRN…EYLEDGKVLE (76 aa)). 6 WD repeats span residues 206 to 245 (EHCNEVWFCKFSNDGTKLATGSKDTTVIVWQVDADTHLLK), 252 to 291 (GHAYGVSYIAWSPDDSYLVACGPDDCSELWLWNVQTGELR), 297 to 337 (SHED…DSWE), 377 to 416 (QEDHPIMSFTISKNGRLALLNVATQGVHLWDLQDRVLVRK), 419 to 461 (GVTQ…PIAE), and 464 to 504 (GHTR…DHQN).

In terms of assembly, forms homooligomers. Identified in the CTLH complex that contains GID4, RANBP9 and/or RANBP10, MKLN1, MAEA, RMND5A (or alternatively its paralog RMND5B), GID8, ARMC8, WDR26 and YPEL5. Within this complex, MAEA, RMND5A (or alternatively its paralog RMND5B), GID8, WDR26, and RANBP9 and/or RANBP10 form the catalytic core, while GID4, MKLN1, ARMC8 and YPEL5 have ancillary roles. Interacts with DDB1-CUL4A/B E3 ligase complexes. Forms a complex composed of at least WDR26, a G-beta:gamma unit, and PLCB2. Interacts with AXIN1.

It localises to the cytoplasm. The protein resides in the nucleus. Its subcellular location is the mitochondrion. In terms of biological role, G-beta-like protein involved in cell signal transduction. Acts as a negative regulator in MAPK signaling pathway. Functions as a scaffolding protein to promote G beta:gamma-mediated PLCB2 plasma membrane translocation and subsequent activation in leukocytes. Core component of the CTLH E3 ubiquitin-protein ligase complex that selectively accepts ubiquitin from UBE2H and mediates ubiquitination and subsequent proteasomal degradation of the transcription factor HBP1. Acts as a negative regulator of the canonical Wnt signaling pathway through preventing ubiquitination of beta-catenin CTNNB1 by the beta-catenin destruction complex, thus negatively regulating CTNNB1 degradation. Protects cells from oxidative stress-induced apoptosis via the down-regulation of AP-1 transcriptional activity as well as by inhibiting cytochrome c release from mitochondria. Also protects cells by promoting hypoxia-mediated autophagy and mitophagy. The sequence is that of WD repeat-containing protein 26 (Wdr26) from Rattus norvegicus (Rat).